Reading from the N-terminus, the 852-residue chain is Translation initiation factor IF-2 (852 aa).

A disordered region spans residues 1–240; that stretch reads MEDKNKTIKE…KTSSDKRDFS (240 aa). A compositionally biased stretch (basic and acidic residues) spans 78–90; the sequence is KEVKYEESSRKQD. Residues 106–120 are compositionally biased toward polar residues; sequence VRPSGDSSYPVSRSP. Positions 150–200 are enriched in gly residues; that stretch reads RGPGQGGGYQGNRGPGQGGGYQGNRGPGQQTGPGNRFGGSGPGNRSGGPGG. A compositionally biased stretch (basic and acidic residues) spans 227-240; it reads HDKEKTSSDKRDFS. The tr-type G domain maps to 347–516; that stretch reads NRPPVVTIMG…LLQAEVMDLK (170 aa). The G1 stretch occupies residues 356 to 363; it reads GHVDHGKT. Residue 356–363 coordinates GTP; it reads GHVDHGKT. Positions 381–385 are G2; it reads GITQH. The interval 402–405 is G3; it reads DTPG. GTP contacts are provided by residues 402 to 406 and 456 to 459; these read DTPGH and NKID. Residues 456–459 are G4; it reads NKID. The tract at residues 492–494 is G5; the sequence is SAR.

Belongs to the TRAFAC class translation factor GTPase superfamily. Classic translation factor GTPase family. IF-2 subfamily.

It is found in the cytoplasm. In terms of biological role, one of the essential components for the initiation of protein synthesis. Protects formylmethionyl-tRNA from spontaneous hydrolysis and promotes its binding to the 30S ribosomal subunits. Also involved in the hydrolysis of GTP during the formation of the 70S ribosomal complex. This is Translation initiation factor IF-2 from Leptospira borgpetersenii serovar Hardjo-bovis (strain JB197).